The primary structure comprises 152 residues: uncharacterized protein (152 aa).

This is an uncharacterized protein from Acanthamoeba polyphaga (Amoeba).